A 54-amino-acid polypeptide reads, in one-letter code: Large ribosomal subunit protein bL33 (54 aa).

It belongs to the bacterial ribosomal protein bL33 family.

This chain is Large ribosomal subunit protein bL33, found in Symbiobacterium thermophilum (strain DSM 24528 / JCM 14929 / IAM 14863 / T).